The chain runs to 310 residues: ADP-L-glycero-D-manno-heptose-6-epimerase (310 aa).

NADP(+) contacts are provided by residues 10 to 11 (FI), 31 to 32 (DN), Lys-38, Lys-53, 75 to 79 (EGACS), and Asn-92. The Proton acceptor role is filled by Tyr-140. Position 144 (Lys-144) interacts with NADP(+). Asn-169 serves as a coordination point for substrate. NADP(+) is bound by residues Val-170 and Lys-178. The active-site Proton acceptor is Lys-178. Residues Ser-180, His-187, 201–204 (FEGS), and Arg-209 each bind substrate. Residue Lys-267 is modified to N6-acetyllysine. Tyr-272 lines the substrate pocket.

It belongs to the NAD(P)-dependent epimerase/dehydratase family. HldD subfamily. Homopentamer. NADP(+) is required as a cofactor.

The enzyme catalyses ADP-D-glycero-beta-D-manno-heptose = ADP-L-glycero-beta-D-manno-heptose. It participates in nucleotide-sugar biosynthesis; ADP-L-glycero-beta-D-manno-heptose biosynthesis; ADP-L-glycero-beta-D-manno-heptose from D-glycero-beta-D-manno-heptose 7-phosphate: step 4/4. Its function is as follows. Catalyzes the interconversion between ADP-D-glycero-beta-D-manno-heptose and ADP-L-glycero-beta-D-manno-heptose via an epimerization at carbon 6 of the heptose. The protein is ADP-L-glycero-D-manno-heptose-6-epimerase of Shigella boydii serotype 18 (strain CDC 3083-94 / BS512).